Here is a 186-residue protein sequence, read N- to C-terminus: ATP synthase subunit b 3 (186 aa).

A helical membrane pass occupies residues L5 to F25.

The protein belongs to the ATPase B chain family. As to quaternary structure, F-type ATPases have 2 components, F(1) - the catalytic core - and F(0) - the membrane proton channel. F(1) has five subunits: alpha(3), beta(3), gamma(1), delta(1), epsilon(1). F(0) has three main subunits: a(1), b(2) and c(10-14). The alpha and beta chains form an alternating ring which encloses part of the gamma chain. F(1) is attached to F(0) by a central stalk formed by the gamma and epsilon chains, while a peripheral stalk is formed by the delta and b chains.

Its subcellular location is the cell inner membrane. F(1)F(0) ATP synthase produces ATP from ADP in the presence of a proton or sodium gradient. F-type ATPases consist of two structural domains, F(1) containing the extramembraneous catalytic core and F(0) containing the membrane proton channel, linked together by a central stalk and a peripheral stalk. During catalysis, ATP synthesis in the catalytic domain of F(1) is coupled via a rotary mechanism of the central stalk subunits to proton translocation. Its function is as follows. Component of the F(0) channel, it forms part of the peripheral stalk, linking F(1) to F(0). In Dinoroseobacter shibae (strain DSM 16493 / NCIMB 14021 / DFL 12), this protein is ATP synthase subunit b 3.